Reading from the N-terminus, the 129-residue chain is Mini-ribonuclease 3-like protein (129 aa).

D23 is an active-site residue.

This sequence belongs to the MrnC RNase family.

Functionally, might be a ribonuclease involved in RNA processing. The sequence is that of Mini-ribonuclease 3-like protein (mrnCL) from Fusobacterium nucleatum subsp. nucleatum (strain ATCC 25586 / DSM 15643 / BCRC 10681 / CIP 101130 / JCM 8532 / KCTC 2640 / LMG 13131 / VPI 4355).